The chain runs to 228 residues: 2-C-methyl-D-erythritol 4-phosphate cytidylyltransferase (228 aa).

Belongs to the IspD/TarI cytidylyltransferase family. IspD subfamily.

It catalyses the reaction 2-C-methyl-D-erythritol 4-phosphate + CTP + H(+) = 4-CDP-2-C-methyl-D-erythritol + diphosphate. It participates in isoprenoid biosynthesis; isopentenyl diphosphate biosynthesis via DXP pathway; isopentenyl diphosphate from 1-deoxy-D-xylulose 5-phosphate: step 2/6. In terms of biological role, catalyzes the formation of 4-diphosphocytidyl-2-C-methyl-D-erythritol from CTP and 2-C-methyl-D-erythritol 4-phosphate (MEP). This chain is 2-C-methyl-D-erythritol 4-phosphate cytidylyltransferase, found in Dechloromonas aromatica (strain RCB).